The primary structure comprises 165 residues: Large ribosomal subunit protein uL11 (165 aa).

Ser38 bears the Phosphoserine mark. Residue Lys40 forms a Glycyl lysine isopeptide (Lys-Gly) (interchain with G-Cter in SUMO2) linkage. A Glycyl lysine isopeptide (Lys-Gly) (interchain with G-Cter in ubiquitin) cross-link involves residue Lys48. Lys54 bears the N6-acetyllysine mark. A Glycyl lysine isopeptide (Lys-Gly) (interchain with G-Cter in ubiquitin) cross-link involves residue Lys83. Residue Ser165 is modified to Phosphoserine.

The protein belongs to the universal ribosomal protein uL11 family. Component of the large ribosomal subunit. Mature ribosomes consist of a small (40S) and a large (60S) subunit. The 40S subunit contains about 33 different proteins and 1 molecule of RNA (18S). The 60S subunit contains about 49 different proteins and 3 molecules of RNA (28S, 5.8S and 5S). In terms of processing, ubiquitinated at Lys-48 and Lys-83 by RNF14 and RNF25 in response to ribosome collisions (ribosome stalling).

It is found in the cytoplasm. Its function is as follows. Component of the large ribosomal subunit. The ribosome is a large ribonucleoprotein complex responsible for the synthesis of proteins in the cell. Binds directly to 26S ribosomal RNA. This is Large ribosomal subunit protein uL11 (RPL12) from Chinchilla lanigera (Long-tailed chinchilla).